A 255-amino-acid polypeptide reads, in one-letter code: Flagellar brake protein YcgR (255 aa).

The PilZ domain occupies 130–245 (QRREHFRVPL…MAAHLQRFVM (116 aa)).

It belongs to the YcgR family. In terms of assembly, monomer. Interacts with the flagellar basal bodies.

Its subcellular location is the bacterial flagellum basal body. Acts as a flagellar brake, regulating swimming and swarming in a bis-(3'-5') cyclic diguanylic acid (c-di-GMP)-dependent manner. Binds 1 c-di-GMP dimer per subunit. Increasing levels of c-di-GMP lead to decreased motility. In Thiobacillus denitrificans (strain ATCC 25259 / T1), this protein is Flagellar brake protein YcgR.